Reading from the N-terminus, the 91-residue chain is Small ribosomal subunit protein uS19 (91 aa).

The protein belongs to the universal ribosomal protein uS19 family.

Protein S19 forms a complex with S13 that binds strongly to the 16S ribosomal RNA. This chain is Small ribosomal subunit protein uS19, found in Trichodesmium erythraeum (strain IMS101).